The chain runs to 343 residues: uncharacterized protein (343 aa).

This is an uncharacterized protein from Tortricidae (ClGV).